A 420-amino-acid polypeptide reads, in one-letter code: Tubulin epsilon and delta complex protein 1 (420 aa).

Residues 276–340 (SEGGLGELES…AVQQELAALQ (65 aa)) adopt a coiled-coil conformation. Positions 342–351 (SWEQSSTPGQ) are enriched in polar residues. The tract at residues 342 to 369 (SWEQSSTPGQPQRPHRLVRSKDGAPRPQ) is disordered. The stretch at 377-409 (IRTLSAKEACLKKALHQLQRQCQQELARLAGAL) forms a coiled coil.

In terms of assembly, interacts with TEDC2. Found in a complex with TEDC1, TEDC2, TUBE1 and TUBD1.

The protein resides in the cell projection. It localises to the cilium. Its subcellular location is the cytoplasm. It is found in the cytoskeleton. The protein localises to the microtubule organizing center. The protein resides in the centrosome. It localises to the centriole. Acts as a positive regulator of ciliary hedgehog signaling. Required for centriole stability. May play a role in counteracting perturbation of actin filaments, such as after treatment with the actin depolymerizing microbial metabolite Chivosazole F. The chain is Tubulin epsilon and delta complex protein 1 from Mus musculus (Mouse).